Consider the following 1927-residue polypeptide: Lactase/phlorizin hydrolase (1927 aa).

An N-terminal signal peptide occupies residues methionine 1–glycine 19. Residues serine 20–arginine 868 constitute a propeptide, XBetaGly. Residues serine 20–threonine 1882 are Extracellular-facing. A glycan (N-linked (GlcNAc...) asparagine) is linked at asparagine 42. The interval serine 44–cysteine 286 is glycosyl hydrolase-1 1; Region I. Residues isoleucine 362–leucine 855 are glycosyl hydrolase-1 2; Region II. N-linked (GlcNAc...) asparagine glycosylation is found at asparagine 368, asparagine 418, asparagine 512, asparagine 821, asparagine 934, asparagine 946, and asparagine 989. Residues threonine 902–leucine 1366 form a glycosyl hydrolase-1 3; Region III. Phlorizin hydrolase/glycosylceramidase activity region. Glutamate 1065 functions as the Proton donor; for phlorizin hydrolase/Glycosylceramidase activity in the catalytic mechanism. N-linked (GlcNAc...) asparagine glycosylation is present at asparagine 1174. Residues arginine 1220–alanine 1244 are disordered. Over residues tyrosine 1226–proline 1238 the composition is skewed to acidic residues. Glutamate 1273 serves as the catalytic Nucleophile; for phlorizin hydrolase/Glycosylceramidase activity. Residues asparagine 1340 and asparagine 1508 are each glycosylated (N-linked (GlcNAc...) asparagine). Residues leucine 1373–glycine 1846 are glycosyl hydrolase-1 4; Region IV. Lactase activity. The active-site Proton donor; for lactase activity is glutamate 1538. A required for homodimerization and transport to the plasma membrane region spans residues arginine 1647 to phenylalanine 1927. N-linked (GlcNAc...) asparagine glycosylation is found at asparagine 1656 and asparagine 1672. Residue glutamate 1749 is the Nucleophile; for lactase activity of the active site. N-linked (GlcNAc...) asparagine glycans are attached at residues asparagine 1761 and asparagine 1814. The helical transmembrane segment at alanine 1883–leucine 1901 threads the bilayer. At serine 1902–phenylalanine 1927 the chain is on the cytoplasmic side.

This sequence belongs to the glycosyl hydrolase 1 family. In terms of assembly, homodimer. In terms of processing, N-glycosylated. In terms of tissue distribution, specifically expressed in small intestine.

The protein localises to the apical cell membrane. The enzyme catalyses lactose + H2O = beta-D-galactose + D-glucose. It carries out the reaction phlorizin + H2O = phloretin + beta-D-glucose. The catalysed reaction is D-cellobiose + H2O = beta-D-glucose + D-glucose. It catalyses the reaction quercetin 4'-O-beta-D-glucoside + H2O = quercetin + beta-D-glucose. The enzyme catalyses quercetin 3-O-beta-D-glucoside + H2O = quercetin + beta-D-glucose. It carries out the reaction kaempferol 3-O-beta-D-glucoside + H2O = kaempferol + beta-D-glucose. The catalysed reaction is luteolin 7-O-beta-D-glucoside + H2O = luteolin + beta-D-glucose. It catalyses the reaction luteolin 4'-O-beta-D-glucoside + H2O = luteolin + beta-D-glucose. The enzyme catalyses (2S)-naringenin 7-O-beta-D-glucoside + H2O = (2S)-naringenin + beta-D-glucose. It carries out the reaction eriodictyol-7-O-beta-D-glucoside + H2O = (S)-eriodictyol + beta-D-glucose. The catalysed reaction is apigenin 7-O-beta-D-glucoside + H2O = apigenin + beta-D-glucose. It catalyses the reaction daidzein 7-O-beta-D-glucoside + H2O = daidzein + beta-D-glucose + H(+). The enzyme catalyses genistein 7-O-beta-D-glucoside + H2O = genistein + beta-D-glucose. It carries out the reaction a beta-D-galactosyl-N-acylsphingosine + H2O = a ceramide + beta-D-galactose.. The catalysed reaction is beta-D-glucosyl-(1&lt;-&gt;1')-N-hexadecanoylsphing-4-enine + H2O = N-hexadecanoylsphing-4-enine + beta-D-glucose. It catalyses the reaction beta-D-galactosyl-(1&lt;-&gt;1')-N-hexadecanoylsphing-4-enine + H2O = beta-D-galactose + N-hexadecanoylsphing-4-enine. The enzyme catalyses beta-D-galactosyl-(1&lt;-&gt;1')-N-hexadecanoylsphinganine + H2O = N-hexadecanoylsphinganine + beta-D-galactose. It carries out the reaction beta-D-glucosyl-(1&lt;-&gt;1')-N-hexadecanoylsphinganine + H2O = N-hexadecanoylsphinganine + beta-D-glucose. Its function is as follows. Broad specificity glycosidase of the intestinal brush border membrane that hydrolyzes lactose, the main sugar in mammalian milk, to produce D-glucose and D-galactose. The mature protein is composed of two domains that catalyze the hydrolysis of beta-glucopyranosides and beta-galactopyranosides, with a preference for hydrophilic aglycones (in lactose and cellobiose) for one domain and hydrophobic aglycones (in phlorizin and glycosylceramides) for the other. The sequence is that of Lactase/phlorizin hydrolase from Homo sapiens (Human).